A 171-amino-acid chain; its full sequence is uncharacterized protein (171 aa).

Residues M1–A18 form the signal peptide. Residue C19 is the site of N-palmitoyl cysteine attachment. The S-diacylglycerol cysteine moiety is linked to residue C19.

Its subcellular location is the cell membrane. This is an uncharacterized protein from Escherichia coli (strain K12).